We begin with the raw amino-acid sequence, 331 residues long: Endo-1,4-beta-xylanase 2 (331 aa).

Positions 1–17 (MKASSVLLGLAPLAALA) are cleaved as a signal peptide. The GH10 domain occupies 31–329 (QQSIDALMKA…KPAYNSVVQA (299 aa)). N-linked (GlcNAc...) asparagine glycosylation is present at asparagine 105. The active-site Proton donor is the glutamate 159. The active-site Nucleophile is glutamate 266. Cysteine 284 and cysteine 290 are oxidised to a cystine. An N-linked (GlcNAc...) asparagine glycan is attached at asparagine 301.

Belongs to the glycosyl hydrolase 10 (cellulase F) family.

The protein localises to the secreted. It carries out the reaction Endohydrolysis of (1-&gt;4)-beta-D-xylosidic linkages in xylans.. The protein operates within glycan degradation; xylan degradation. Its function is as follows. Endo-1,4-beta-xylanase involved in the hydrolysis of xylan, a major structural heterogeneous polysaccharide found in plant biomass representing the second most abundant polysaccharide in the biosphere, after cellulose. Accounts for approximately 70 percent of the endoxylanase activity in the culture filtrate. This is Endo-1,4-beta-xylanase 2 (XYL2) from Pyricularia grisea (Crabgrass-specific blast fungus).